The sequence spans 132 residues: Thioredoxin H4-2 (132 aa).

The 113-residue stretch at 18–130 folds into the Thioredoxin domain; sequence DFKGGNVHVI…LEKKVQALAD (113 aa). Residues Cys56 and Cys59 each act as nucleophile in the active site. A disulfide bond links Cys56 and Cys59.

The protein belongs to the thioredoxin family. Plant H-type subfamily.

It is found in the cytoplasm. In terms of biological role, probable thiol-disulfide oxidoreductase that may be involved in the redox regulation of a number of cytosolic enzymes. The sequence is that of Thioredoxin H4-2 from Oryza sativa subsp. japonica (Rice).